The primary structure comprises 803 residues: Ribonuclease II, chloroplastic/mitochondrial (803 aa).

A chloroplast and mitochondrion-targeting transit peptide spans 1 to 35 (MMSVRAINGCSIIRTATSAGGPPVSLFRHRIQRLR). The RNB domain occupies 399–694 (RIDLTHLKVY…AHYQIKAFLR (296 aa)).

It belongs to the RNR ribonuclease family. As to expression, expressed in seedlings, roots, leaves and flowers.

The protein localises to the mitochondrion. It localises to the plastid. The protein resides in the chloroplast. It catalyses the reaction Exonucleolytic cleavage in the 3'- to 5'-direction to yield nucleoside 5'-phosphates.. In terms of biological role, 3'-5' exoribonuclease that catalyzes 3' maturation of chloroplast and mitochondrion ribosomal RNAs; degrades short nucleotidic extensions to generate the mature 3'-ends. Involved in the maturation of 23S, 16S and 5S rRNAs. In Arabidopsis thaliana (Mouse-ear cress), this protein is Ribonuclease II, chloroplastic/mitochondrial (RNR1).